A 191-amino-acid polypeptide reads, in one-letter code: Thymidine kinase (191 aa).

Residues G15 to T22 and D88 to Q91 contribute to the ATP site. Catalysis depends on E89, which acts as the Proton acceptor. Residues C145, C148, C183, and C186 each contribute to the Zn(2+) site.

It belongs to the thymidine kinase family. Homotetramer.

The protein localises to the cytoplasm. The catalysed reaction is thymidine + ATP = dTMP + ADP + H(+). This is Thymidine kinase from Clostridium botulinum (strain Kyoto / Type A2).